A 96-amino-acid polypeptide reads, in one-letter code: Small ribosomal subunit protein bS20 (96 aa).

Belongs to the bacterial ribosomal protein bS20 family.

Its function is as follows. Binds directly to 16S ribosomal RNA. The protein is Small ribosomal subunit protein bS20 of Anaplasma marginale (strain St. Maries).